Consider the following 94-residue polypeptide: Small ribosomal subunit protein bS18 (94 aa).

The protein belongs to the bacterial ribosomal protein bS18 family. Part of the 30S ribosomal subunit. Forms a tight heterodimer with protein bS6.

Its function is as follows. Binds as a heterodimer with protein bS6 to the central domain of the 16S rRNA, where it helps stabilize the platform of the 30S subunit. This chain is Small ribosomal subunit protein bS18, found in Leptospira biflexa serovar Patoc (strain Patoc 1 / Ames).